A 142-amino-acid chain; its full sequence is Ribosome-binding factor A (142 aa).

Residues D118 to K142 form a disordered region.

Belongs to the RbfA family. Monomer. Binds 30S ribosomal subunits, but not 50S ribosomal subunits or 70S ribosomes.

It is found in the cytoplasm. In terms of biological role, one of several proteins that assist in the late maturation steps of the functional core of the 30S ribosomal subunit. Associates with free 30S ribosomal subunits (but not with 30S subunits that are part of 70S ribosomes or polysomes). Required for efficient processing of 16S rRNA. May interact with the 5'-terminal helix region of 16S rRNA. This chain is Ribosome-binding factor A, found in Shewanella piezotolerans (strain WP3 / JCM 13877).